The chain runs to 904 residues: Essential for maintenance of the cell wall protein 1 (904 aa).

TPR repeat units lie at residues 510–544 (WQLD…ETAL), 563–596 (INEN…GKYV), 603–636 (AKYY…YPLS), 637–670 (FETW…DPYH), 671–704 (ALSW…DAQK), and 706–739 (WKIW…RRDK).

The protein belongs to the TTC27 family.

It is found in the cytoplasm. The protein resides in the nucleus. Required for the maintenance of the cell wall integrity. This Saccharomyces cerevisiae (strain ATCC 204508 / S288c) (Baker's yeast) protein is Essential for maintenance of the cell wall protein 1 (EMW1).